The chain runs to 468 residues: Glutamate--tRNA ligase (468 aa).

The short motif at 8-18 (PSPTGDPHVGT) is the 'HIGH' region element. Positions 243–247 (KISKR) match the 'KMSKS' region motif. Lys-246 serves as a coordination point for ATP.

It belongs to the class-I aminoacyl-tRNA synthetase family. Glutamate--tRNA ligase type 1 subfamily. As to quaternary structure, monomer.

It localises to the cytoplasm. It carries out the reaction tRNA(Glu) + L-glutamate + ATP = L-glutamyl-tRNA(Glu) + AMP + diphosphate. Functionally, catalyzes the attachment of glutamate to tRNA(Glu) in a two-step reaction: glutamate is first activated by ATP to form Glu-AMP and then transferred to the acceptor end of tRNA(Glu). In Thermus thermophilus (strain ATCC BAA-163 / DSM 7039 / HB27), this protein is Glutamate--tRNA ligase.